The primary structure comprises 432 residues: UPF0597 protein APL_1605 (432 aa).

It belongs to the UPF0597 family.

This Actinobacillus pleuropneumoniae serotype 5b (strain L20) protein is UPF0597 protein APL_1605.